The following is a 96-amino-acid chain: MGLSFSGARPCCCRNNVLITDDGEVVSLTAHDFDVVDIESEEEGNFYVPPDMRVVTRAPGRQRLRSSDPPSRHTHRRTPGGACPATQFPPPMSDSE.

Gly-2 is lipidated: N-myristoyl glycine; by host. The Di-leucine-like internalization motif signature appears at 18–19 (LI). The segment at 37–43 (DIESEEE) is asp/Glu-rich (acidic). Position 40 is a phosphoserine (Ser-40). Residues 57-96 (RAPGRQRLRSSDPPSRHTHRRTPGGACPATQFPPPMSDSE) form a disordered region. Pro residues predominate over residues 87–96 (QFPPPMSDSE).

Belongs to the herpesviridae cytoplasmic envelopment protein 3 family. Interacts with cytoplasmic envelopment protein 2; this interaction is essential for the proper localization of each protein to the assembly complex and thus for the production of infectious virus. Interacts with gE (via C-terminus). Interacts with gD (via C-terminus). Interacts with UL56. Post-translationally, myristoylation and palmitoylation (probably on one or more of the nearby cysteines at the N-terminus) enable membrane-binding and Golgi apparatus-specific targeting and are essential for efficient packaging. In terms of processing, phosphorylated. Phosphorylation does not seem to be required for recycling to the host Golgi apparatus. Packaging is selective for underphosphorylated forms.

The protein resides in the virion tegument. The protein localises to the virion membrane. It is found in the host cell membrane. It localises to the host Golgi apparatus membrane. Plays an important role in the cytoplasmic envelopment of tegument proteins and capsids during the assembly and egress processes. Also participates in viral entry at the fusion step probably by regulating the core fusion machinery. The protein is Cytoplasmic envelopment protein 3 of Human herpesvirus 1 (strain KOS) (HHV-1).